The following is a 461-amino-acid chain: Nuclear distribution protein PAC1 (461 aa).

A LisH domain is found at 9 to 41; sequence QAEELHKAIIAYLSANNLSSSATALRTELGLAE. Positions 61–88 form a coiled coil; it reads TSVVRLQKKIMDLESRNNALQSELDNAT. WD repeat units lie at residues 114-155, 157-197, 201-248, 251-290, 295-355, 357-396, 401-444, and 446-461; these read SHQN…RTIK, HTRP…KNIR, GHDH…CLKT, GHTA…PENR, GHDH…LKTL, GHDN…KCVK, VHER…VRIR, and VIAT…IFAN.

The protein belongs to the WD repeat LIS1/nudF family. In terms of assembly, self-associates. Interacts with NDL1 and dynein.

The protein resides in the cytoplasm. It localises to the cytoskeleton. The protein localises to the spindle pole. Functionally, positively regulates the activity of the minus-end directed microtubule motor protein dynein. May enhance dynein-mediated microtubule sliding by targeting dynein to the microtubule plus end. Required for nuclear migration during vegetative growth as well as development. Required for retrograde early endosome (EE) transport from the hyphal tip. Required for localization of dynein to the mitotic spindle poles. Recruits additional proteins to the dynein complex at SPBs. The sequence is that of Nuclear distribution protein PAC1 from Pyricularia oryzae (strain 70-15 / ATCC MYA-4617 / FGSC 8958) (Rice blast fungus).